Consider the following 242-residue polypeptide: Protein crossbronx (242 aa).

Residues 20 to 176 enclose the UBC core domain; it reads QQEYKILAEY…VQENIKESKA (157 aa).

The protein belongs to the ubiquitin-conjugating enzyme family. FTS subfamily.

In Drosophila ananassae (Fruit fly), this protein is Protein crossbronx (cbx).